The chain runs to 1087 residues: Exportin-7 (1087 aa).

Positions 30–96 (AEKALVEFTN…RNYVLNYLAT (67 aa)) constitute an Importin N-terminal domain.

It belongs to the exportin family.

The protein resides in the cytoplasm. The protein localises to the nucleus. In terms of biological role, mediates the nuclear export of proteins (cargos) with broad substrate specificity. This chain is Exportin-7 (XPO7), found in Gallus gallus (Chicken).